Reading from the N-terminus, the 581-residue chain is MLIKSEYKPRMLPKEEQVKKPMTSNGRISFVLMAMAVLFACLIARGLYLQTVTYNFLKEQGDNRIVRTQALPATRGTVSDRNGAVLALSAPTESLFAVPKDMKEMPSAAQLERLSELVDVPVDVLRNKLEQKGKSFIWIKRQLDPKVAEEVKALGLENFVFEKELKRHYPMGNLFAHVIGFTDIDGKGQEGLELSLEDSLYGEDGAEVVLRDRQGNIVDSLDSPRNKAPQNGKDIILSLDQRIQTLAYEELNKAVEYHQAKAGTVVVLDARTGEILALANTPAYDPNRPGRADSEQRRNRAVTDMIEPGSAIKPFVIAKALDAGKTDLNERLNTQPYKIGPSPVRDTHVYPSLDVRGIMQKSSNVGTSKLSARFGAEEMYDFYHELGIGVRMHSGFPGETAGLLRNWRRWRPIEQATMSFGYGLQLSLLQLARAYTALTHDGVLLPLSFEKQAVAPQGKRIFKESTAREVRNLMVSVTEPGGTGTAGAVDGFDVGAKTGTARKFVNGRYADNKHVATFIGFAPAKNPRVIVAVTIDEPTAHGYYGGVVAGPPFKKIMGGSLNILGISPTKPLTAAAVKTPS.

A helical membrane pass occupies residues 28–48; the sequence is ISFVLMAMAVLFACLIARGLY. S310 serves as the catalytic Acyl-ester intermediate.

The protein belongs to the transpeptidase family. FtsI subfamily.

The protein localises to the cell inner membrane. The catalysed reaction is Preferential cleavage: (Ac)2-L-Lys-D-Ala-|-D-Ala. Also transpeptidation of peptidyl-alanyl moieties that are N-acyl substituents of D-alanine.. It functions in the pathway cell wall biogenesis; peptidoglycan biosynthesis. Catalyzes cross-linking of the peptidoglycan cell wall at the division septum. The protein is Probable peptidoglycan D,D-transpeptidase PenA of Neisseria gonorrhoeae.